A 280-amino-acid polypeptide reads, in one-letter code: Cell division protein SepF (280 aa).

Residues 22–117 (DYVDDRAPRA…DDYPEDAYGE (96 aa)) form a disordered region. 2 stretches are compositionally biased toward basic and acidic residues: residues 25 to 36 (DDRAPRASERGG) and 53 to 83 (RYGE…GADR).

It belongs to the SepF family. As to quaternary structure, homodimer. Interacts with FtsZ.

The protein resides in the cytoplasm. Its function is as follows. Cell division protein that is part of the divisome complex and is recruited early to the Z-ring. Probably stimulates Z-ring formation, perhaps through the cross-linking of FtsZ protofilaments. Its function overlaps with FtsA. In Nocardia farcinica (strain IFM 10152), this protein is Cell division protein SepF.